A 157-amino-acid polypeptide reads, in one-letter code: Protein TIFY 8 (157 aa).

Residues 33–68 form the Tify domain; sequence VPGTTEQLTIFYSGSMVKFDNVPREKIRYACRLRRL. Residues 126–147 form a disordered region; the sequence is SIGAQRTGTPPSRRRIHARGKS. Basic residues predominate over residues 137-147; sequence SRRRIHARGKS.

This sequence belongs to the TIFY/JAZ family. Ubiquitinated. Targeted for degradation by the SCF(COI1) E3 ubiquitin ligase-proteasome pathway during jasmonate signaling.

Repressor of jasmonate responses. This chain is Protein TIFY 8, found in Oryza sativa subsp. japonica (Rice).